The chain runs to 191 residues: 2-amino-4-hydroxy-6-hydroxymethyldihydropteridine pyrophosphokinase (191 aa).

This sequence belongs to the HPPK family.

The enzyme catalyses 6-hydroxymethyl-7,8-dihydropterin + ATP = (7,8-dihydropterin-6-yl)methyl diphosphate + AMP + H(+). Its pathway is cofactor biosynthesis; tetrahydrofolate biosynthesis; 2-amino-4-hydroxy-6-hydroxymethyl-7,8-dihydropteridine diphosphate from 7,8-dihydroneopterin triphosphate: step 4/4. In terms of biological role, catalyzes the transfer of pyrophosphate from adenosine triphosphate (ATP) to 6-hydroxymethyl-7,8-dihydropterin, an enzymatic step in folate biosynthesis pathway. The sequence is that of 2-amino-4-hydroxy-6-hydroxymethyldihydropteridine pyrophosphokinase (folK) from Mycobacterium leprae (strain TN).